Reading from the N-terminus, the 502-residue chain is Lysine--tRNA ligase (502 aa).

2 residues coordinate Mg(2+): E412 and E419.

Belongs to the class-II aminoacyl-tRNA synthetase family. Homodimer. It depends on Mg(2+) as a cofactor.

The protein resides in the cytoplasm. It carries out the reaction tRNA(Lys) + L-lysine + ATP = L-lysyl-tRNA(Lys) + AMP + diphosphate. This is Lysine--tRNA ligase from Buchnera aphidicola subsp. Cinara cedri (strain Cc).